We begin with the raw amino-acid sequence, 276 residues long: Formamidopyrimidine-DNA glycosylase (276 aa).

Pro-2 serves as the catalytic Schiff-base intermediate with DNA. Residue Glu-3 is the Proton donor of the active site. Catalysis depends on Lys-59, which acts as the Proton donor; for beta-elimination activity. Residues His-93, Arg-112, and Arg-155 each coordinate DNA. Residues 240-274 form an FPG-type zinc finger; the sequence is QVYNREGKPCPRCGDKIAKKKVGGRSSYYCPTCQK. The active-site Proton donor; for delta-elimination activity is the Arg-264.

Belongs to the FPG family. Monomer. Requires Zn(2+) as cofactor.

The enzyme catalyses Hydrolysis of DNA containing ring-opened 7-methylguanine residues, releasing 2,6-diamino-4-hydroxy-5-(N-methyl)formamidopyrimidine.. It catalyses the reaction 2'-deoxyribonucleotide-(2'-deoxyribose 5'-phosphate)-2'-deoxyribonucleotide-DNA = a 3'-end 2'-deoxyribonucleotide-(2,3-dehydro-2,3-deoxyribose 5'-phosphate)-DNA + a 5'-end 5'-phospho-2'-deoxyribonucleoside-DNA + H(+). Involved in base excision repair of DNA damaged by oxidation or by mutagenic agents. Acts as a DNA glycosylase that recognizes and removes damaged bases. Has a preference for oxidized purines, such as 7,8-dihydro-8-oxoguanine (8-oxoG). Has AP (apurinic/apyrimidinic) lyase activity and introduces nicks in the DNA strand. Cleaves the DNA backbone by beta-delta elimination to generate a single-strand break at the site of the removed base with both 3'- and 5'-phosphates. The polypeptide is Formamidopyrimidine-DNA glycosylase (Pelotomaculum thermopropionicum (strain DSM 13744 / JCM 10971 / SI)).